Reading from the N-terminus, the 531-residue chain is Apolipoprotein N-acyltransferase (531 aa).

7 helical membrane-spanning segments follow: residues 8 to 28 (IILL…LLAV), 34 to 54 (FGIF…IDGV), 69 to 89 (PAAI…WWLG), 105 to 125 (LAVV…VVIA), 136 to 156 (IAAL…VFTG), 178 to 198 (VVNL…PALI), and 207 to 227 (GLAI…YRLA). The CN hydrolase domain maps to 243–493 (VQPVIDQAKK…RGVLDTILPG (251 aa)). The active-site Proton acceptor is Glu-287. Lys-351 is an active-site residue. Cys-405 acts as the Nucleophile in catalysis. A helical transmembrane segment spans residues 507-527 (IFWLSMAILSIVASFSRFGFN).

The protein belongs to the CN hydrolase family. Apolipoprotein N-acyltransferase subfamily.

Its subcellular location is the cell inner membrane. It carries out the reaction N-terminal S-1,2-diacyl-sn-glyceryl-L-cysteinyl-[lipoprotein] + a glycerophospholipid = N-acyl-S-1,2-diacyl-sn-glyceryl-L-cysteinyl-[lipoprotein] + a 2-acyl-sn-glycero-3-phospholipid + H(+). Its pathway is protein modification; lipoprotein biosynthesis (N-acyl transfer). Its function is as follows. Catalyzes the phospholipid dependent N-acylation of the N-terminal cysteine of apolipoprotein, the last step in lipoprotein maturation. The protein is Apolipoprotein N-acyltransferase of Sinorhizobium medicae (strain WSM419) (Ensifer medicae).